Consider the following 587-residue polypeptide: Zinc finger protein 496 (587 aa).

The segment at 1–40 is disordered; the sequence is MPTALCPRVLAPKESEEPRKMRSPPGENPSPQGELPSPES. The segment covering 11-20 has biased composition (basic and acidic residues); the sequence is APKESEEPRK. K13 is covalently cross-linked (Glycyl lysine isopeptide (Lys-Gly) (interchain with G-Cter in SUMO2)). One can recognise an SCAN box domain in the interval 42 to 124; the sequence is RRLFRRFRYQ…AAVEALEREP (83 aa). S185 is modified (phosphoserine). One can recognise a KRAB domain in the interval 221 to 291; the sequence is SPFKDMILCF…ELQDLQGKEV (71 aa). A disordered region spans residues 260 to 282; it reads PPNDLAAQPDLSQGEENEPRVPE. Position 299 is a phosphoserine (S299). The tract at residues 358–399 is disordered; it reads SSSGDEDSQHGPYCTEELGSPTEKQRSLPASHRSSTEAGGEV. A compositionally biased stretch (polar residues) spans 389-399; sequence HRSSTEAGGEV. K403 participates in a covalent cross-link: Glycyl lysine isopeptide (Lys-Gly) (interchain with G-Cter in SUMO2). The segment at 406-428 adopts a C2H2-type 1; degenerate zinc-finger fold; the sequence is YVCPNCGKIFRWRVNFIRHLRSR. 2 consecutive C2H2-type zinc fingers follow at residues 435-457 and 463-485; these read HECS…LESH and YRCG…RRIH. The interval 488–513 is disordered; the sequence is PDRLQPVEKREQAASEDADKGPKEPL. A Glycyl lysine isopeptide (Lys-Gly) (interchain with G-Cter in SUMO2) cross-link involves residue K496. 2 consecutive C2H2-type zinc fingers follow at residues 522–545 and 553–575; these read FQCC…SHFH and FQCR…ERLH.

It belongs to the krueppel C2H2-type zinc-finger protein family. In terms of assembly, interacts (via zinc-fingers) with JARID2. Interacts with NSD1.

It localises to the nucleus. Its function is as follows. DNA-binding transcription factor that can both act as an activator and a repressor. The polypeptide is Zinc finger protein 496 (ZNF496) (Homo sapiens (Human)).